A 338-amino-acid chain; its full sequence is Holliday junction branch migration complex subunit RuvB (338 aa).

The large ATPase domain (RuvB-L) stretch occupies residues 1-180; it reads MERLLDNKFS…FGIIERLDYY (180 aa). ATP-binding residues include Leu19, Arg20, Gly61, Lys64, Thr65, Thr66, Arg170, Tyr180, and Arg217. Residue Thr65 coordinates Mg(2+). The tract at residues 181–251 is small ATPAse domain (RuvB-S); sequence TVEELSQIVM…VAKSGLEMFE (71 aa). The tract at residues 254–338 is head domain (RuvB-H); that stretch reads EYGLDLVDRN…FNVKESGDKR (85 aa). DNA contacts are provided by Lys309 and Arg314.

The protein belongs to the RuvB family. As to quaternary structure, homohexamer. Forms an RuvA(8)-RuvB(12)-Holliday junction (HJ) complex. HJ DNA is sandwiched between 2 RuvA tetramers; dsDNA enters through RuvA and exits via RuvB. An RuvB hexamer assembles on each DNA strand where it exits the tetramer. Each RuvB hexamer is contacted by two RuvA subunits (via domain III) on 2 adjacent RuvB subunits; this complex drives branch migration. In the full resolvosome a probable DNA-RuvA(4)-RuvB(12)-RuvC(2) complex forms which resolves the HJ.

Its subcellular location is the cytoplasm. It catalyses the reaction ATP + H2O = ADP + phosphate + H(+). The RuvA-RuvB-RuvC complex processes Holliday junction (HJ) DNA during genetic recombination and DNA repair, while the RuvA-RuvB complex plays an important role in the rescue of blocked DNA replication forks via replication fork reversal (RFR). RuvA specifically binds to HJ cruciform DNA, conferring on it an open structure. The RuvB hexamer acts as an ATP-dependent pump, pulling dsDNA into and through the RuvAB complex. RuvB forms 2 homohexamers on either side of HJ DNA bound by 1 or 2 RuvA tetramers; 4 subunits per hexamer contact DNA at a time. Coordinated motions by a converter formed by DNA-disengaged RuvB subunits stimulates ATP hydrolysis and nucleotide exchange. Immobilization of the converter enables RuvB to convert the ATP-contained energy into a lever motion, pulling 2 nucleotides of DNA out of the RuvA tetramer per ATP hydrolyzed, thus driving DNA branch migration. The RuvB motors rotate together with the DNA substrate, which together with the progressing nucleotide cycle form the mechanistic basis for DNA recombination by continuous HJ branch migration. Branch migration allows RuvC to scan DNA until it finds its consensus sequence, where it cleaves and resolves cruciform DNA. In Caldicellulosiruptor saccharolyticus (strain ATCC 43494 / DSM 8903 / Tp8T 6331), this protein is Holliday junction branch migration complex subunit RuvB.